Reading from the N-terminus, the 101-residue chain is Putative pterin-4-alpha-carbinolamine dehydratase (101 aa).

Belongs to the pterin-4-alpha-carbinolamine dehydratase family.

The catalysed reaction is (4aS,6R)-4a-hydroxy-L-erythro-5,6,7,8-tetrahydrobiopterin = (6R)-L-erythro-6,7-dihydrobiopterin + H2O. This chain is Putative pterin-4-alpha-carbinolamine dehydratase, found in Rhizobium leguminosarum bv. trifolii (strain WSM2304).